Consider the following 317-residue polypeptide: Transaldolase A (317 aa).

Lysine 132 (schiff-base intermediate with substrate) is an active-site residue.

The protein belongs to the transaldolase family. Type 1 subfamily. Homodimer.

It localises to the cytoplasm. It carries out the reaction D-sedoheptulose 7-phosphate + D-glyceraldehyde 3-phosphate = D-erythrose 4-phosphate + beta-D-fructose 6-phosphate. Its pathway is carbohydrate degradation; pentose phosphate pathway; D-glyceraldehyde 3-phosphate and beta-D-fructose 6-phosphate from D-ribose 5-phosphate and D-xylulose 5-phosphate (non-oxidative stage): step 2/3. In terms of biological role, transaldolase is important for the balance of metabolites in the pentose-phosphate pathway. This chain is Transaldolase A (talA), found in Pasteurella multocida (strain Pm70).